The following is a 216-amino-acid chain: Ribonuclease HII (216 aa).

The region spanning 33-216 is the RNase H type-2 domain; the sequence is WPVAGADEAG…RMSFRPFRQL (184 aa). D39, E40, and D130 together coordinate a divalent metal cation.

Belongs to the RNase HII family. Mn(2+) serves as cofactor. Mg(2+) is required as a cofactor.

It is found in the cytoplasm. The enzyme catalyses Endonucleolytic cleavage to 5'-phosphomonoester.. Functionally, endonuclease that specifically degrades the RNA of RNA-DNA hybrids. The chain is Ribonuclease HII from Sinorhizobium medicae (strain WSM419) (Ensifer medicae).